Reading from the N-terminus, the 90-residue chain is Evasin P1126 (90 aa).

An N-terminal signal peptide occupies residues Met-1 to Ser-25. Disulfide bonds link Cys-46–Cys-62, Cys-50–Cys-64, and Cys-58–Cys-75. Asn-55 is a glycosylation site (N-linked (GlcNAc...) asparagine). Asn-77 is a glycosylation site (N-linked (GlcNAc...) asparagine).

The protein resides in the secreted. Functionally, salivary chemokine-binding protein which binds to host chemokines CXCL1, CXCL2, CXCL3, CXCL4, CXCL5, CXCL6, CXCL7, CXCL10 and CXCL11. This is Evasin P1126 from Amblyomma cajennense (Cayenne tick).